The sequence spans 434 residues: Beta-enolase (434 aa).

The residue at position 2 (Ala2) is an N-acetylalanine. Residue Thr72 is modified to Phosphothreonine. Ser83 and Ser157 each carry phosphoserine. Substrate is bound by residues His158 and Glu167. The residue at position 176 (Ser176) is a Phosphoserine. Residue Thr205 is modified to Phosphothreonine. The Proton donor role is filled by Glu210. Thr229 is modified (phosphothreonine). Tyr236 is modified (phosphotyrosine). Position 245 (Asp245) interacts with Mg(2+). Phosphoserine is present on Ser263. 2 residues coordinate substrate: Glu293 and Asp318. Mg(2+)-binding residues include Glu293 and Asp318. Catalysis depends on Lys343, which acts as the Proton acceptor. Substrate-binding positions include 370–373 (SHRS) and Lys394.

Belongs to the enolase family. As to quaternary structure, mammalian enolase is composed of 3 isozyme subunits, alpha, beta and gamma, which can form homodimers or heterodimers which are cell-type and development-specific. In vitro, interacts with several glycolytic enzymes including PKM, PGM, CKM and ALDO. Also binds PLG and troponin, in vitro. Interacts with PNKD. It depends on Mg(2+) as a cofactor. In terms of tissue distribution, brain (at protein level). The alpha/alpha homodimer is expressed in embryo and in most adult tissues. The alpha/beta heterodimer and the beta/beta homodimer are found in striated muscle, and the alpha/gamma heterodimer and the gamma/gamma homodimer in neurons. In striated muscle, the fiber-type order of ENO3 expression is IIB &gt; IIX &gt; IIA &gt; I.

Its subcellular location is the cytoplasm. It catalyses the reaction (2R)-2-phosphoglycerate = phosphoenolpyruvate + H2O. The protein operates within carbohydrate degradation; glycolysis; pyruvate from D-glyceraldehyde 3-phosphate: step 4/5. Its function is as follows. Glycolytic enzyme that catalyzes the conversion of 2-phosphoglycerate to phosphoenolpyruvate. Appears to have a function in striated muscle development and regeneration. This chain is Beta-enolase (Eno3), found in Mus musculus (Mouse).